We begin with the raw amino-acid sequence, 507 residues long: Tabersonine/lochnericine 19-hydroxylase (507 aa).

Residues 8–28 form a helical membrane-spanning segment; it reads FFVLLLPFFIGIAFIYKLWNF. Asn167 is a glycosylation site (N-linked (GlcNAc...) asparagine). Cys447 provides a ligand contact to heme.

It belongs to the cytochrome P450 family. Heme serves as cofactor. As to expression, confined to roots.

The protein localises to the endoplasmic reticulum membrane. It carries out the reaction (-)-tabersonine + reduced [NADPH--hemoprotein reductase] + O2 = (-)-(R)-19-hydroxytabersonine + oxidized [NADPH--hemoprotein reductase] + H2O + H(+). The enzyme catalyses lochnericine + reduced [NADPH--hemoprotein reductase] + O2 = horhammericine + oxidized [NADPH--hemoprotein reductase] + H2O + H(+). The catalysed reaction is (-)-vincadifformine + reduced [NADPH--hemoprotein reductase] + O2 = (-)-minovincinine + oxidized [NADPH--hemoprotein reductase] + H2O + H(+). It functions in the pathway alkaloid biosynthesis. Component of the monoterpenoid indole alkaloids (MIAs, e.g. echitovenine, tabersonine, lochnericine, 19-hydroxytabersonine and horhammericine) biosynthetic pathway; MIAs are used in cancer treatment and other medical applications. Cytochrome P450 catalyzing the conversion of (-)-tabersonine to 19-hydroxytabersonine, of lochnericine to horhammericine and of (-)-vincadifformine to (-)-minovincinine. The sequence is that of Tabersonine/lochnericine 19-hydroxylase from Catharanthus roseus (Madagascar periwinkle).